The chain runs to 308 residues: Glutamyl-Q tRNA(Asp) synthetase (308 aa).

L-glutamate contacts are provided by residues 19-23 (RFAPS) and glutamate 55. A 'HIGH' region motif is present at residues 22–32 (PSPSGELHFGS). Positions 111, 113, 125, and 129 each coordinate Zn(2+). Residues tyrosine 182 and arginine 200 each contribute to the L-glutamate site. Residues 238–242 (KLSKQ) carry the 'KMSKS' region motif. Lysine 241 contributes to the ATP binding site.

The protein belongs to the class-I aminoacyl-tRNA synthetase family. GluQ subfamily. Zn(2+) serves as cofactor.

Functionally, catalyzes the tRNA-independent activation of glutamate in presence of ATP and the subsequent transfer of glutamate onto a tRNA(Asp). Glutamate is transferred on the 2-amino-5-(4,5-dihydroxy-2-cyclopenten-1-yl) moiety of the queuosine in the wobble position of the QUC anticodon. This is Glutamyl-Q tRNA(Asp) synthetase from Escherichia coli (strain K12 / MC4100 / BW2952).